Consider the following 347-residue polypeptide: DNA-directed RNA polymerase subunit alpha (347 aa).

An alpha N-terminal domain (alpha-NTD) region spans residues 1–226 (MLISQRPTLS…ELFGLARELN (226 aa)). Residues 243-347 (HIASFALPID…EQDYAETEQL (105 aa)) form an alpha C-terminal domain (alpha-CTD) region.

Belongs to the RNA polymerase alpha chain family. As to quaternary structure, homodimer. The RNAP catalytic core consists of 2 alpha, 1 beta, 1 beta' and 1 omega subunit. When a sigma factor is associated with the core the holoenzyme is formed, which can initiate transcription.

It carries out the reaction RNA(n) + a ribonucleoside 5'-triphosphate = RNA(n+1) + diphosphate. DNA-dependent RNA polymerase catalyzes the transcription of DNA into RNA using the four ribonucleoside triphosphates as substrates. This Mycobacterium bovis (strain ATCC BAA-935 / AF2122/97) protein is DNA-directed RNA polymerase subunit alpha.